A 688-amino-acid chain; its full sequence is Two-component response regulator ORR23 (688 aa).

Residues 25-140 (RVLAVDDDPV…ELRNIWQHVI (116 aa)) enclose the Response regulatory domain. At aspartate 76 the chain carries 4-aspartylphosphate. The disordered stretch occupies residues 161-212 (PPNADSDHVHGHVTCGSPDQSGRPSKKRKEYCSEEEDEGEVNTQDIDDPSAP). Residues 193 to 208 (SEEEDEGEVNTQDIDD) are compositionally biased toward acidic residues. Positions 211 to 270 (APKKPRVVWSVELHRKFVAAVNQLGIDKAVPKRILELMNVEKLTRENVASHLQKYRLYLK) form a DNA-binding region, myb-like GARP.

Belongs to the ARR family. Type-B subfamily. Post-translationally, two-component system major event consists of a His-to-Asp phosphorelay between a sensor histidine kinase (HK) and a response regulator (RR). In plants, the His-to-Asp phosphorelay involves an additional intermediate named Histidine-containing phosphotransfer protein (HPt). This multistep phosphorelay consists of a His-Asp-His-Asp sequential transfer of a phosphate group between first a His and an Asp of the HK protein, followed by the transfer to a conserved His of the HPt protein and finally the transfer to an Asp in the receiver domain of the RR protein.

It is found in the nucleus. Functionally, transcriptional activator that binds specific DNA sequence. Functions as a response regulator involved in His-to-Asp phosphorelay signal transduction system. Phosphorylation of the Asp residue in the receiver domain activates the ability of the protein to promote the transcription of target genes. May directly activate some type-A response regulators in response to cytokinins. The chain is Two-component response regulator ORR23 from Oryza sativa subsp. indica (Rice).